Reading from the N-terminus, the 206-residue chain is 2-phospho-L-lactate guanylyltransferase (206 aa).

Belongs to the CofC family. Homodimer.

It carries out the reaction (2S)-2-phospholactate + GTP + H(+) = (2S)-lactyl-2-diphospho-5'-guanosine + diphosphate. It functions in the pathway cofactor biosynthesis; coenzyme F420 biosynthesis. Guanylyltransferase that catalyzes the activation of (2S)-2-phospholactate (2-PL) as (2S)-lactyl-2-diphospho-5'-guanosine, via the condensation of 2-PL with GTP. It is involved in the biosynthesis of coenzyme F420, a hydride carrier cofactor. This Haloferax volcanii (strain ATCC 29605 / DSM 3757 / JCM 8879 / NBRC 14742 / NCIMB 2012 / VKM B-1768 / DS2) (Halobacterium volcanii) protein is 2-phospho-L-lactate guanylyltransferase.